We begin with the raw amino-acid sequence, 266 residues long: Glutamate racemase (266 aa).

Residues 9–10 (DS) and 41–42 (YG) contribute to the substrate site. Catalysis depends on Cys72, which acts as the Proton donor/acceptor. Residue 73 to 74 (NT) coordinates substrate. Cys184 functions as the Proton donor/acceptor in the catalytic mechanism. 185 to 186 (TH) serves as a coordination point for substrate.

This sequence belongs to the aspartate/glutamate racemases family.

It carries out the reaction L-glutamate = D-glutamate. The protein operates within cell wall biogenesis; peptidoglycan biosynthesis. Its function is as follows. Provides the (R)-glutamate required for cell wall biosynthesis. In Staphylococcus aureus (strain bovine RF122 / ET3-1), this protein is Glutamate racemase.